A 96-amino-acid polypeptide reads, in one-letter code: MSAVETCADGLVLRLYIQPKASRDSIVGVHGDELKVAITAPPVDGQANAHLVKFLAKQFRVAKSQVLIEKGELGRHKQVKIIAPQQIPTAVAALTE.

It belongs to the UPF0235 family.

In Klebsiella pneumoniae (strain 342), this protein is UPF0235 protein KPK_0722.